A 191-amino-acid chain; its full sequence is Dephospho-CoA kinase (191 aa).

Residues 3–191 (AIGITGSYAS…KLIKDLECRV (189 aa)) form the DPCK domain. 11–16 (ASGKTF) contacts ATP.

The protein belongs to the CoaE family.

Its subcellular location is the cytoplasm. It catalyses the reaction 3'-dephospho-CoA + ATP = ADP + CoA + H(+). The protein operates within cofactor biosynthesis; coenzyme A biosynthesis; CoA from (R)-pantothenate: step 5/5. Its function is as follows. Catalyzes the phosphorylation of the 3'-hydroxyl group of dephosphocoenzyme A to form coenzyme A. This Rickettsia conorii (strain ATCC VR-613 / Malish 7) protein is Dephospho-CoA kinase.